The chain runs to 196 residues: dTTP/UTP pyrophosphatase (196 aa).

Aspartate 72 functions as the Proton acceptor in the catalytic mechanism.

This sequence belongs to the Maf family. YhdE subfamily. A divalent metal cation is required as a cofactor.

Its subcellular location is the cytoplasm. It catalyses the reaction dTTP + H2O = dTMP + diphosphate + H(+). The catalysed reaction is UTP + H2O = UMP + diphosphate + H(+). In terms of biological role, nucleoside triphosphate pyrophosphatase that hydrolyzes dTTP and UTP. May have a dual role in cell division arrest and in preventing the incorporation of modified nucleotides into cellular nucleic acids. The chain is dTTP/UTP pyrophosphatase from Chlamydia trachomatis serovar A (strain ATCC VR-571B / DSM 19440 / HAR-13).